A 375-amino-acid polypeptide reads, in one-letter code: 4-hydroxy-3-methylbut-2-en-1-yl diphosphate synthase (flavodoxin) (375 aa).

[4Fe-4S] cluster contacts are provided by C268, C271, C303, and E310.

This sequence belongs to the IspG family. It depends on [4Fe-4S] cluster as a cofactor.

It carries out the reaction (2E)-4-hydroxy-3-methylbut-2-enyl diphosphate + oxidized [flavodoxin] + H2O + 2 H(+) = 2-C-methyl-D-erythritol 2,4-cyclic diphosphate + reduced [flavodoxin]. It functions in the pathway isoprenoid biosynthesis; isopentenyl diphosphate biosynthesis via DXP pathway; isopentenyl diphosphate from 1-deoxy-D-xylulose 5-phosphate: step 5/6. Converts 2C-methyl-D-erythritol 2,4-cyclodiphosphate (ME-2,4cPP) into 1-hydroxy-2-methyl-2-(E)-butenyl 4-diphosphate. The polypeptide is 4-hydroxy-3-methylbut-2-en-1-yl diphosphate synthase (flavodoxin) (Bacillus velezensis (strain DSM 23117 / BGSC 10A6 / LMG 26770 / FZB42) (Bacillus amyloliquefaciens subsp. plantarum)).